Consider the following 394-residue polypeptide: NAD(P)H-quinone oxidoreductase subunit H (394 aa).

This sequence belongs to the complex I 49 kDa subunit family. In terms of assembly, NDH-1 can be composed of about 15 different subunits; different subcomplexes with different compositions have been identified which probably have different functions.

It localises to the cellular thylakoid membrane. The enzyme catalyses a plastoquinone + NADH + (n+1) H(+)(in) = a plastoquinol + NAD(+) + n H(+)(out). It catalyses the reaction a plastoquinone + NADPH + (n+1) H(+)(in) = a plastoquinol + NADP(+) + n H(+)(out). Functionally, NDH-1 shuttles electrons from an unknown electron donor, via FMN and iron-sulfur (Fe-S) centers, to quinones in the respiratory and/or the photosynthetic chain. The immediate electron acceptor for the enzyme in this species is believed to be plastoquinone. Couples the redox reaction to proton translocation, and thus conserves the redox energy in a proton gradient. Cyanobacterial NDH-1 also plays a role in inorganic carbon-concentration. The chain is NAD(P)H-quinone oxidoreductase subunit H from Synechococcus sp. (strain WH7803).